The sequence spans 140 residues: ATP synthase epsilon chain 1 (140 aa).

The protein belongs to the ATPase epsilon chain family. As to quaternary structure, F-type ATPases have 2 components, CF(1) - the catalytic core - and CF(0) - the membrane proton channel. CF(1) has five subunits: alpha(3), beta(3), gamma(1), delta(1), epsilon(1). CF(0) has three main subunits: a, b and c.

It is found in the cell inner membrane. Functionally, produces ATP from ADP in the presence of a proton gradient across the membrane. This is ATP synthase epsilon chain 1 from Photobacterium profundum (strain SS9).